The following is a 280-amino-acid chain: Ribonuclease Z (280 aa).

Zn(2+)-binding residues include His-61, His-63, Asp-65, His-66, His-153, Asp-176, and His-240. Catalysis depends on Asp-65, which acts as the Proton acceptor.

This sequence belongs to the RNase Z family. As to quaternary structure, homodimer. It depends on Zn(2+) as a cofactor.

It catalyses the reaction Endonucleolytic cleavage of RNA, removing extra 3' nucleotides from tRNA precursor, generating 3' termini of tRNAs. A 3'-hydroxy group is left at the tRNA terminus and a 5'-phosphoryl group is left at the trailer molecule.. Functionally, zinc phosphodiesterase, which displays some tRNA 3'-processing endonuclease activity. Probably involved in tRNA maturation, by removing a 3'-trailer from precursor tRNA. In Mycolicibacterium paratuberculosis (strain ATCC BAA-968 / K-10) (Mycobacterium paratuberculosis), this protein is Ribonuclease Z.